We begin with the raw amino-acid sequence, 515 residues long: Peroxisomal catalase A (515 aa).

Serine 2 is modified (N-acetylserine). Active-site residues include histidine 70 and asparagine 143. Tyrosine 355 is a heme binding site. Positions 513–515 match the Microbody targeting signal motif; it reads SKF.

This sequence belongs to the catalase family. In terms of assembly, homotetramer. Heme is required as a cofactor.

The protein resides in the peroxisome matrix. The catalysed reaction is 2 H2O2 = O2 + 2 H2O. In terms of biological role, catalyzes the degradation of hydrogen peroxide (H(2)O(2)) generated by peroxisomal oxidases to water and oxygen, thereby protecting cells from the toxic effects of hydrogen peroxide. This chain is Peroxisomal catalase A (CTA1), found in Saccharomyces cerevisiae (strain ATCC 204508 / S288c) (Baker's yeast).